The following is a 552-amino-acid chain: MRRLTRRLVLPVFGVLWITVLLFFWVTKRKLEVPTGPEVQTPKPSDADWDDLWDQFDERRYLNAKKWRVGDDPYKLYAFNQRESERISSNRAIPDTRHLRCTLLVYCTDLPPTSIIITFHNEARSTLLRTIRSVLNRTPTHLIREIILVDDFSNDPDDCKQLIKLPKVKCLRNNERQGLVRSRIRGADIAQGTTLTFLDSHCEVNRDWLQPLLHRVKEDYTRVVCPVIDIINLDTFTYIESASELRGGFDWSLHFQWEQLSPEQKARRLDPTEPIRTPIIAGGLFVIDKAWFDYLGKYDMDMDIWGGENFEISFRVWMCGGSLEIVPCSRVGHVFRKKHPYVFPDGNANTYIKNTKRTAEVWMDEYKQYYYAARPFALERPFGNVESRLDLRKNLRCQSFKWYLENIYPELSIPKESSIQKGNIRQRQKCLESQRQNNQETPNLKLSPCAKVKGEDAKSQVWAFTYTQQILQEELCLSVITLFPGAPVVLVLCKNGDDRQQWTKTGSHIEHIASHLCLDTDMFGDGTENGKEIVVNPCESSLMSQHWDMVSS.

Topologically, residues 1–6 are cytoplasmic; that stretch reads MRRLTR. The chain crosses the membrane as a helical; Signal-anchor for type II membrane protein span at residues 7–26; sequence RLVLPVFGVLWITVLLFFWV. At 27–552 the chain is on the lumenal side; the sequence is TKRKLEVPTG…MSQHWDMVSS (526 aa). Intrachain disulfides connect Cys-101–Cys-328, Cys-319–Cys-397, Cys-430–Cys-449, Cys-476–Cys-493, and Cys-517–Cys-538. Positions 110-215 are catalytic subdomain A; sequence LPPTSIIITF…RDWLQPLLHR (106 aa). Substrate is bound by residues Asp-151 and Arg-176. Asp-199 lines the Mn(2+) pocket. Ser-200 is a binding site for substrate. His-201 lines the Mn(2+) pocket. The interval 274–336 is catalytic subdomain B; that stretch reads PIRTPIIAGG…PCSRVGHVFR (63 aa). Trp-305 lines the substrate pocket. A Mn(2+)-binding site is contributed by His-333. Residues Arg-336, His-339, and Tyr-341 each contribute to the substrate site. Residues 415 to 550 form the Ricin B-type lectin domain; the sequence is KESSIQKGNI…SLMSQHWDMV (136 aa).

Belongs to the glycosyltransferase 2 family. GalNAc-T subfamily. Requires Mn(2+) as cofactor. In terms of tissue distribution, detected in renal tubules (at protein level). Highly expressed in fetal and adult kidney. Widely expressed at low level. Weakly expressed in whole brain, cerebellum, thymus, lung, mammary gland, liver, stomach, small intestine, colon, pancreas, spleen, bladder, uterus, placenta, testis, ovary, skeletal muscle, leukocyte, B-cell, bone marrow, fetal brain, fetal thymus, fetal lung, fetal liver, fetal small intestine, fetal spleen, fetal skeletal and fetus. Detected in renal tubules (at protein level).

The protein localises to the golgi apparatus membrane. The catalysed reaction is L-seryl-[protein] + UDP-N-acetyl-alpha-D-galactosamine = a 3-O-[N-acetyl-alpha-D-galactosaminyl]-L-seryl-[protein] + UDP + H(+). It carries out the reaction L-threonyl-[protein] + UDP-N-acetyl-alpha-D-galactosamine = a 3-O-[N-acetyl-alpha-D-galactosaminyl]-L-threonyl-[protein] + UDP + H(+). It participates in protein modification; protein glycosylation. In terms of biological role, catalyzes the initial reaction in O-linked oligosaccharide biosynthesis, the transfer of an N-acetyl-D-galactosamine residue to a serine or threonine residue on the protein receptor. Displays activity toward mucin-derived peptide substrates such as Muc2, Muc5AC, Muc7, and Muc13 (-58). May be involved in O-glycosylation in kidney. The protein is Polypeptide N-acetylgalactosaminyltransferase 14 (GALNT14) of Homo sapiens (Human).